The chain runs to 1295 residues: Phosphoribosylformylglycinamidine synthase (1295 aa).

The disordered stretch occupies residues 305-327 (WPGAATGSGGEIRDEGATGRGAK). Residues 307–318 (GAATGSGGEIRD) and alanine 678 each bind ATP. Residues glutamate 718, asparagine 722, and aspartate 884 each contribute to the Mg(2+) site. Serine 886 is an ATP binding site. Residues 1042 to 1295 (VAVLREQGVN…IFRNARKQLG (254 aa)) enclose the Glutamine amidotransferase type-1 domain. Cysteine 1135 (nucleophile) is an active-site residue. Active-site residues include histidine 1260 and glutamate 1262.

The protein in the N-terminal section; belongs to the FGAMS family. In terms of assembly, monomer.

Its subcellular location is the cytoplasm. The enzyme catalyses N(2)-formyl-N(1)-(5-phospho-beta-D-ribosyl)glycinamide + L-glutamine + ATP + H2O = 2-formamido-N(1)-(5-O-phospho-beta-D-ribosyl)acetamidine + L-glutamate + ADP + phosphate + H(+). It participates in purine metabolism; IMP biosynthesis via de novo pathway; 5-amino-1-(5-phospho-D-ribosyl)imidazole from N(2)-formyl-N(1)-(5-phospho-D-ribosyl)glycinamide: step 1/2. Functionally, phosphoribosylformylglycinamidine synthase involved in the purines biosynthetic pathway. Catalyzes the ATP-dependent conversion of formylglycinamide ribonucleotide (FGAR) and glutamine to yield formylglycinamidine ribonucleotide (FGAM) and glutamate. The polypeptide is Phosphoribosylformylglycinamidine synthase (Shigella sonnei (strain Ss046)).